A 671-amino-acid polypeptide reads, in one-letter code: Carbohydrate acetyl esterase/feruloyl esterase (671 aa).

The N-terminal stretch at 1–24 (MYQSTLKTILLASALLILPASMSA) is a signal peptide. The carbohydrate acetyl esterase stretch occupies residues 1 to 296 (MYQSTLKTIL…YGEAVARHLG (296 aa)). Active-site for acetyl esterase activity residues include S55, D271, and H274. The interval 297 to 671 (YEPKRPYIEM…NEFIPHLFKK (375 aa)) is feruloyl esterase.

The protein in the N-terminal section; belongs to the carbohydrate esterase 6 family.

It catalyses the reaction feruloyl-polysaccharide + H2O = ferulate + polysaccharide.. It participates in glycan degradation; xylan degradation. Its function is as follows. Involved in degradation of plant cell wall polysaccharides. Bifunctional esterase that possesses both acetyl esterase and ferulic acid esterase activities. Has deacetylase activity towards acetylated xylo-oligosaccharides smaller than xylo-heptaose, as well as from glucose-pentaacetate. Is also able to release ferulic acid from methylferulate, and from the more natural substrates wheat bran, corn fiber, and XOS(FA,Ac), a corn fiber-derived substrate enriched in O-acetyl and ferulic acid esters. This is Carbohydrate acetyl esterase/feruloyl esterase from Xylanibacter ruminicola (strain ATCC 19189 / DSM 19721 / CIP 105475 / JCM 8958 / 23) (Prevotella ruminicola).